A 218-amino-acid polypeptide reads, in one-letter code: Adapter protein MecA (218 aa).

This sequence belongs to the MecA family. Homodimer.

Enables the recognition and targeting of unfolded and aggregated proteins to the ClpC protease or to other proteins involved in proteolysis. This Exiguobacterium sp. (strain ATCC BAA-1283 / AT1b) protein is Adapter protein MecA.